Consider the following 433-residue polypeptide: Protein slt1 (433 aa).

Disordered stretches follow at residues 159–184 (SPEE…SEYA), 200–234 (NAPE…EELS), and 252–433 (SNKR…DEDA). Polar residues-rich tracts occupy residues 172–184 (DQQT…SEYA) and 215–228 (TLPN…QASV). Residues Ser-227, Ser-229, and Ser-269 each carry the phosphoserine modification. Residues 343-353 (IDTKAGEKLTD) show a composition bias toward basic and acidic residues. Positions 385 to 421 (EGSNNHEQGSFNEPKSNVDSNDSASPKRPSSQASLRH) are enriched in polar residues. 3 positions are modified to phosphoserine: Ser-409, Ser-415, and Ser-418.

The polypeptide is Protein slt1 (slt1) (Schizosaccharomyces pombe (strain 972 / ATCC 24843) (Fission yeast)).